Here is a 135-residue protein sequence, read N- to C-terminus: UPF0102 protein RPC_0320 (135 aa).

Belongs to the UPF0102 family.

This chain is UPF0102 protein RPC_0320, found in Rhodopseudomonas palustris (strain BisB18).